The primary structure comprises 318 residues: 2-keto-3-deoxygluconate permease (318 aa).

10 helical membrane passes run 10 to 30, 42 to 62, 76 to 96, 105 to 125, 139 to 159, 162 to 182, 199 to 219, 224 to 244, 254 to 274, and 289 to 309; these read IPGG…TFTP, GLIT…GASI, VLVV…GAFL, LLAG…NGGL, AGAF…VILG, GIAT…LIGF, VQTL…LSVI, FAGI…LILA, TAGI…LLIA, and ALVA…TALW.

Belongs to the KdgT transporter family.

Its subcellular location is the cell inner membrane. The enzyme catalyses 2-dehydro-3-deoxy-D-gluconate(in) + H(+)(in) = 2-dehydro-3-deoxy-D-gluconate(out) + H(+)(out). In terms of biological role, catalyzes the proton-dependent uptake of 2-keto-3-deoxygluconate (KDG) into the cell. In Pectobacterium atrosepticum (strain SCRI 1043 / ATCC BAA-672) (Erwinia carotovora subsp. atroseptica), this protein is 2-keto-3-deoxygluconate permease.